Reading from the N-terminus, the 227-residue chain is Mediator of RNA polymerase II transcription subunit 18 (227 aa).

Belongs to the Mediator complex subunit 18 family. Component of the Mediator complex.

The protein resides in the nucleus. Its function is as follows. Component of the Mediator complex, a coactivator involved in the regulated transcription of nearly all RNA polymerase II-dependent genes. Mediator functions as a bridge to convey information from gene-specific regulatory proteins to the basal RNA polymerase II transcription machinery. Mediator is recruited to promoters by direct interactions with regulatory proteins and serves as a scaffold for the assembly of a functional preinitiation complex with RNA polymerase II and the general transcription factors. In Caenorhabditis briggsae, this protein is Mediator of RNA polymerase II transcription subunit 18 (mdt-18).